Reading from the N-terminus, the 222-residue chain is Vacuolar protein sorting-associated protein 2 homolog 2 (222 aa).

Coiled coils occupy residues 26–83 (RGIE…AQIR) and 143–222 (SEAI…LRRI). The tract at residues 179 to 222 (SSAPKGRIATKTAAPPASTAATNKNSESSEVDELEKRLASLRRI) is disordered. Over residues 187–203 (ATKTAAPPASTAATNKN) the composition is skewed to low complexity.

It belongs to the SNF7 family. As to quaternary structure, component of the endosomal sorting required for transport complex III (ESCRT-III), composed at least of VPS2, VPS20, VPS24 and VPS32. Interacts with CHMP1A, CHMP1B and VPS60-1.

The protein localises to the endosome. Component of the ESCRT-III complex, which is required for multivesicular bodies (MVBs) formation and sorting of endosomal cargo proteins into MVBs. The ESCRT-III complex is probably involved in the concentration of MVB cargo. This chain is Vacuolar protein sorting-associated protein 2 homolog 2 (VPS2.2), found in Arabidopsis thaliana (Mouse-ear cress).